Reading from the N-terminus, the 485-residue chain is Mitochondria-eating protein (485 aa).

A coiled-coil region spans residues 112–210 (TSHERELNEV…SILSSESSIL (99 aa)). Composition is skewed to low complexity over residues 214-241 (LSRS…SPTS) and 471-485 (RSRS…TPRF). Disordered stretches follow at residues 214–244 (LSRS…SAKL) and 451–485 (RSRS…TPRF).

It belongs to the MIEAP family.

It is found in the cytoplasm. The protein localises to the mitochondrion outer membrane. It localises to the mitochondrion matrix. Functionally, key regulator of mitochondrial quality that mediates the repairing or degradation of unhealthy mitochondria in response to mitochondrial damage. Mediator of mitochondrial protein catabolic process (also named MALM) by mediating the degradation of damaged proteins inside mitochondria by promoting the accumulation in the mitochondrial matrix of hydrolases that are characteristic of the lysosomal lumen. Also involved in mitochondrion degradation of damaged mitochondria by promoting the formation of vacuole-like structures (named MIV), which engulf and degrade unhealthy mitochondria by accumulating lysosomes. Binds cardiolipin. May form molecular condensates (non-membrane-bounded organelles) within mitochondria that compartmentalize and promote cardiolipin metabolism. This is Mitochondria-eating protein (spata18) from Xenopus laevis (African clawed frog).